Reading from the N-terminus, the 243-residue chain is tRNA pseudouridine synthase A (243 aa).

Asp53 serves as the catalytic Nucleophile. Tyr111 is a substrate binding site.

It belongs to the tRNA pseudouridine synthase TruA family. As to quaternary structure, homodimer.

The catalysed reaction is uridine(38/39/40) in tRNA = pseudouridine(38/39/40) in tRNA. In terms of biological role, formation of pseudouridine at positions 38, 39 and 40 in the anticodon stem and loop of transfer RNAs. This Chlorobium chlorochromatii (strain CaD3) protein is tRNA pseudouridine synthase A.